An 82-amino-acid polypeptide reads, in one-letter code: Sec-independent protein translocase protein TatA (82 aa).

Residues 1–21 (MGIFDWKHWIVILIVVVLVFG) traverse the membrane as a helical segment. The tract at residues 43–82 (VNTEEDDKKDQPAAQPAQPLNQPHTIDAQAQKVEEPARKD) is disordered.

The protein belongs to the TatA/E family. In terms of assembly, the Tat system comprises two distinct complexes: a TatABC complex, containing multiple copies of TatA, TatB and TatC subunits, and a separate TatA complex, containing only TatA subunits. Substrates initially bind to the TatABC complex, which probably triggers association of the separate TatA complex to form the active translocon.

Its subcellular location is the cell inner membrane. In terms of biological role, part of the twin-arginine translocation (Tat) system that transports large folded proteins containing a characteristic twin-arginine motif in their signal peptide across membranes. TatA could form the protein-conducting channel of the Tat system. The polypeptide is Sec-independent protein translocase protein TatA (Pseudomonas aeruginosa (strain LESB58)).